Consider the following 291-residue polypeptide: ATP synthase subunit b 2 (291 aa).

Residues 2–22 (LIDGFTVVAQIVNFLILVWLL) form a helical membrane-spanning segment.

It belongs to the ATPase B chain family. As to quaternary structure, F-type ATPases have 2 components, F(1) - the catalytic core - and F(0) - the membrane proton channel. F(1) has five subunits: alpha(3), beta(3), gamma(1), delta(1), epsilon(1). F(0) has three main subunits: a(1), b(2) and c(10-14). The alpha and beta chains form an alternating ring which encloses part of the gamma chain. F(1) is attached to F(0) by a central stalk formed by the gamma and epsilon chains, while a peripheral stalk is formed by the delta and b chains.

The protein resides in the cell inner membrane. In terms of biological role, f(1)F(0) ATP synthase produces ATP from ADP in the presence of a proton or sodium gradient. F-type ATPases consist of two structural domains, F(1) containing the extramembraneous catalytic core and F(0) containing the membrane proton channel, linked together by a central stalk and a peripheral stalk. During catalysis, ATP synthesis in the catalytic domain of F(1) is coupled via a rotary mechanism of the central stalk subunits to proton translocation. Its function is as follows. Component of the F(0) channel, it forms part of the peripheral stalk, linking F(1) to F(0). The sequence is that of ATP synthase subunit b 2 from Nitrosospira multiformis (strain ATCC 25196 / NCIMB 11849 / C 71).